Consider the following 365-residue polypeptide: Quinone oxidoreductase-like protein 2 homolog (365 aa).

It belongs to the zinc-containing alcohol dehydrogenase family. Quinone oxidoreductase subfamily.

The protein is Quinone oxidoreductase-like protein 2 homolog of Nematostella vectensis (Starlet sea anemone).